Here is a 387-residue protein sequence, read N- to C-terminus: LL-diaminopimelate aminotransferase (387 aa).

Residues tyrosine 14 and glycine 39 each contribute to the substrate site. Pyridoxal 5'-phosphate contacts are provided by residues tyrosine 68, 102–103 (SK), tyrosine 127, asparagine 177, tyrosine 208, and 236–238 (SLS). 3 residues coordinate substrate: lysine 103, tyrosine 127, and asparagine 177. Lysine 239 bears the N6-(pyridoxal phosphate)lysine mark. Residue arginine 247 participates in pyridoxal 5'-phosphate binding. Arginine 365 provides a ligand contact to substrate.

This sequence belongs to the class-I pyridoxal-phosphate-dependent aminotransferase family. LL-diaminopimelate aminotransferase subfamily. In terms of assembly, homodimer. Pyridoxal 5'-phosphate is required as a cofactor.

The enzyme catalyses (2S,6S)-2,6-diaminopimelate + 2-oxoglutarate = (S)-2,3,4,5-tetrahydrodipicolinate + L-glutamate + H2O + H(+). It functions in the pathway amino-acid biosynthesis; L-lysine biosynthesis via DAP pathway; LL-2,6-diaminopimelate from (S)-tetrahydrodipicolinate (aminotransferase route): step 1/1. Its function is as follows. Involved in the synthesis of meso-diaminopimelate (m-DAP or DL-DAP), required for both lysine and peptidoglycan biosynthesis. Catalyzes the direct conversion of tetrahydrodipicolinate to LL-diaminopimelate. The polypeptide is LL-diaminopimelate aminotransferase (Aquifex aeolicus (strain VF5)).